Reading from the N-terminus, the 287-residue chain is Elongation factor Ts (287 aa).

Positions 80–83 are involved in Mg(2+) ion dislocation from EF-Tu; sequence TDFL.

Belongs to the EF-Ts family.

It is found in the cytoplasm. Its function is as follows. Associates with the EF-Tu.GDP complex and induces the exchange of GDP to GTP. It remains bound to the aminoacyl-tRNA.EF-Tu.GTP complex up to the GTP hydrolysis stage on the ribosome. The sequence is that of Elongation factor Ts from Pseudomonas syringae pv. syringae (strain B728a).